The sequence spans 390 residues: Na(+)/H(+) antiporter NhaA (390 aa).

The next 11 helical transmembrane spans lie at 13 to 33, 61 to 81, 99 to 119, 129 to 149, 158 to 178, 181 to 201, 209 to 229, 259 to 279, 297 to 317, 330 to 350, and 367 to 387; these read FQLE…ALVI, LSVH…FVTL, LLPI…YVFI, GWAI…SLLG, VFLT…IAFF, GDLS…LLTL, FIPY…SGIH, AISP…NAGV, ILLG…FIAV, WLSL…SLFV, and IGVL…LLYA.

The protein belongs to the NhaA Na(+)/H(+) (TC 2.A.33) antiporter family.

Its subcellular location is the cell inner membrane. The catalysed reaction is Na(+)(in) + 2 H(+)(out) = Na(+)(out) + 2 H(+)(in). Functionally, na(+)/H(+) antiporter that extrudes sodium in exchange for external protons. The chain is Na(+)/H(+) antiporter NhaA from Pelagibacter ubique (strain HTCC1062).